A 102-amino-acid chain; its full sequence is ATP-dependent Clp protease adapter protein ClpS (102 aa).

This sequence belongs to the ClpS family. In terms of assembly, binds to the N-terminal domain of the chaperone ClpA.

Its function is as follows. Involved in the modulation of the specificity of the ClpAP-mediated ATP-dependent protein degradation. This is ATP-dependent Clp protease adapter protein ClpS from Shewanella putrefaciens (strain CN-32 / ATCC BAA-453).